An 89-amino-acid polypeptide reads, in one-letter code: Large ribosomal subunit protein eL34 (89 aa).

The protein belongs to the eukaryotic ribosomal protein eL34 family.

The polypeptide is Large ribosomal subunit protein eL34 (Methanococcus maripaludis (strain C6 / ATCC BAA-1332)).